The following is a 341-amino-acid chain: Phosphate acyltransferase (341 aa).

The protein belongs to the PlsX family. As to quaternary structure, homodimer. Probably interacts with PlsY.

The protein localises to the cytoplasm. It catalyses the reaction a fatty acyl-[ACP] + phosphate = an acyl phosphate + holo-[ACP]. It participates in lipid metabolism; phospholipid metabolism. Its function is as follows. Catalyzes the reversible formation of acyl-phosphate (acyl-PO(4)) from acyl-[acyl-carrier-protein] (acyl-ACP). This enzyme utilizes acyl-ACP as fatty acyl donor, but not acyl-CoA. The sequence is that of Phosphate acyltransferase from Vibrio cholerae serotype O1 (strain ATCC 39541 / Classical Ogawa 395 / O395).